Consider the following 558-residue polypeptide: Poly(A) polymerase PAPalpha (558 aa).

The span at 1–17 shows a compositional bias: polar residues; sequence MNTKTYGVTEPISTNGP. Positions 1 to 20 are disordered; it reads MNTKTYGVTEPISTNGPTPK. ATP is bound by residues 86 to 88, 99 to 101, Asp153, Lys214, Tyr223, and 232 to 233; these read FGS, DID, and GV. Mg(2+) contacts are provided by Asp99, Asp101, and Asp153. The disordered stretch occupies residues 516–558; sequence VYEDGEERPKKSGKKRKKVIKEDGQKRVRNESPASSASVNGSS. The span at 535–545 shows a compositional bias: basic and acidic residues; the sequence is IKEDGQKRVRN. Positions 547–558 are enriched in low complexity; sequence SPASSASVNGSS.

The protein belongs to the poly(A) polymerase family. Mg(2+) is required as a cofactor. Requires Mn(2+) as cofactor.

It is found in the nucleus. The enzyme catalyses RNA(n) + ATP = RNA(n)-3'-adenine ribonucleotide + diphosphate. In terms of biological role, polymerase that creates the 3'-poly(A) tail of mRNA's. May acquire specificity through interaction with a cleavage and polyadenylation factor. This chain is Poly(A) polymerase PAPalpha (PAPALPHA), found in Candida albicans (strain SC5314 / ATCC MYA-2876) (Yeast).